A 198-amino-acid polypeptide reads, in one-letter code: Neutrophil gelatinase-associated lipocalin (198 aa).

Residues 1–20 (MPLGLLWLGLALLGALHAQA) form the signal peptide. Residue glutamine 21 is modified to Pyrrolidone carboxylic acid. 72–74 (YAT) contributes to the a carboxymycobactin binding site. An N-linked (GlcNAc...) asparagine glycan is attached at asparagine 85. Residues cysteine 96 and cysteine 195 are joined by a disulfide bond. Tyrosine 126 contacts enterobactin. The a carboxymycobactin site is built by lysine 145, lysine 154, and tyrosine 158. Lysine 154 serves as a coordination point for enterobactin.

Belongs to the calycin superfamily. Lipocalin family. In terms of assembly, monomer. Homodimer; disulfide-linked. Heterodimer; disulfide-linked with MMP9. In terms of tissue distribution, detected in neutrophils (at protein level). Expressed in bone marrow and in tissues that are prone to exposure to microorganism. High expression is found in bone marrow as well as in uterus, prostate, salivary gland, stomach, appendix, colon, trachea and lung. Expressed in the medullary tubules of the kidney. Not found in the small intestine or peripheral blood leukocytes.

The protein localises to the secreted. It is found in the cytoplasmic granule lumen. Its subcellular location is the cytoplasmic vesicle lumen. Its function is as follows. Iron-trafficking protein involved in multiple processes such as apoptosis, innate immunity and renal development. Binds iron through association with 2,3-dihydroxybenzoic acid (2,3-DHBA), a siderophore that shares structural similarities with bacterial enterobactin, and delivers or removes iron from the cell, depending on the context. Iron-bound form (holo-24p3) is internalized following binding to the SLC22A17 (24p3R) receptor, leading to release of iron and subsequent increase of intracellular iron concentration. In contrast, association of the iron-free form (apo-24p3) with the SLC22A17 (24p3R) receptor is followed by association with an intracellular siderophore, iron chelation and iron transfer to the extracellular medium, thereby reducing intracellular iron concentration. Involved in apoptosis due to interleukin-3 (IL3) deprivation: iron-loaded form increases intracellular iron concentration without promoting apoptosis, while iron-free form decreases intracellular iron levels, inducing expression of the proapoptotic protein BCL2L11/BIM, resulting in apoptosis. Involved in innate immunity; limits bacterial proliferation by sequestering iron bound to microbial siderophores, such as enterobactin. Can also bind siderophores from M.tuberculosis. The sequence is that of Neutrophil gelatinase-associated lipocalin (LCN2) from Homo sapiens (Human).